The chain runs to 165 residues: Putative universal stress protein SH1215 (165 aa).

This sequence belongs to the universal stress protein A family.

It localises to the cytoplasm. The polypeptide is Putative universal stress protein SH1215 (Staphylococcus haemolyticus (strain JCSC1435)).